The primary structure comprises 473 residues: Anthocyanidin-3-O-glucoside rhamnosyltransferase (473 aa).

It belongs to the UDP-glycosyltransferase family. In terms of tissue distribution, expressed in petals, styles and anthers.

The protein operates within pigment biosynthesis; anthocyanin biosynthesis. In terms of biological role, controls the rhamnosylation of reddish anthocyanidin-3-O-glucosides, which is the first step in a series of modifications that finally yield magenta or blue/purple coloured anthocyanins. Controls the conversion of anthocyanidin-3-O-glucosides to anthocyanidin-3-O-rutinosides. This Petunia hybrida (Petunia) protein is Anthocyanidin-3-O-glucoside rhamnosyltransferase.